The following is a 212-amino-acid chain: Large ribosomal subunit protein uL1 (212 aa).

It belongs to the universal ribosomal protein uL1 family. In terms of assembly, part of the 50S ribosomal subunit.

Binds directly to 23S rRNA. Probably involved in E site tRNA release. Functionally, protein L1 is also a translational repressor protein, it controls the translation of its operon by binding to its mRNA. The chain is Large ribosomal subunit protein uL1 from Natronomonas pharaonis (strain ATCC 35678 / DSM 2160 / CIP 103997 / JCM 8858 / NBRC 14720 / NCIMB 2260 / Gabara) (Halobacterium pharaonis).